A 466-amino-acid polypeptide reads, in one-letter code: ATP synthase subunit beta (466 aa).

Residue 152 to 159 (GGAGVGKT) coordinates ATP.

It belongs to the ATPase alpha/beta chains family. As to quaternary structure, F-type ATPases have 2 components, CF(1) - the catalytic core - and CF(0) - the membrane proton channel. CF(1) has five subunits: alpha(3), beta(3), gamma(1), delta(1), epsilon(1). CF(0) has three main subunits: a(1), b(2) and c(9-12). The alpha and beta chains form an alternating ring which encloses part of the gamma chain. CF(1) is attached to CF(0) by a central stalk formed by the gamma and epsilon chains, while a peripheral stalk is formed by the delta and b chains.

It is found in the cell inner membrane. The catalysed reaction is ATP + H2O + 4 H(+)(in) = ADP + phosphate + 5 H(+)(out). Produces ATP from ADP in the presence of a proton gradient across the membrane. The catalytic sites are hosted primarily by the beta subunits. This Helicobacter acinonychis (strain Sheeba) protein is ATP synthase subunit beta.